The sequence spans 400 residues: Deoxyhypusine synthase-like protein (400 aa).

A disordered region spans residues 372-400; the sequence is KLGKEQMPEPQSTEPVATYPCGTPIKGRK.

It belongs to the deoxyhypusine synthase family.

This is Deoxyhypusine synthase-like protein from Cyanothece sp. (strain PCC 7425 / ATCC 29141).